The sequence spans 314 residues: tRNA dimethylallyltransferase 2 (314 aa).

ATP is bound at residue 8–15; sequence GPTGTGKS. Residue 10-15 coordinates substrate; it reads TGTGKS.

Belongs to the IPP transferase family. In terms of assembly, monomer. It depends on Mg(2+) as a cofactor.

It catalyses the reaction adenosine(37) in tRNA + dimethylallyl diphosphate = N(6)-dimethylallyladenosine(37) in tRNA + diphosphate. Its function is as follows. Catalyzes the transfer of a dimethylallyl group onto the adenine at position 37 in tRNAs that read codons beginning with uridine, leading to the formation of N6-(dimethylallyl)adenosine (i(6)A). This Mycobacterium ulcerans (strain Agy99) protein is tRNA dimethylallyltransferase 2.